We begin with the raw amino-acid sequence, 548 residues long: Chaperonin GroEL 1 (548 aa).

ATP-binding positions include Thr-30–Pro-33, Lys-51, Asp-87–Thr-91, Gly-415, Asn-479–Ala-481, and Asp-495.

Belongs to the chaperonin (HSP60) family. As to quaternary structure, forms a cylinder of 14 subunits composed of two heptameric rings stacked back-to-back. Interacts with the co-chaperonin GroES.

The protein resides in the cytoplasm. The catalysed reaction is ATP + H2O + a folded polypeptide = ADP + phosphate + an unfolded polypeptide.. Functionally, together with its co-chaperonin GroES, plays an essential role in assisting protein folding. The GroEL-GroES system forms a nano-cage that allows encapsulation of the non-native substrate proteins and provides a physical environment optimized to promote and accelerate protein folding. The polypeptide is Chaperonin GroEL 1 (Anaeromyxobacter dehalogenans (strain 2CP-C)).